We begin with the raw amino-acid sequence, 1081 residues long: Zinc finger protein 827 (1081 aa).

Over residues 1 to 10 (MPRRKQEQPK) the composition is skewed to basic and acidic residues. A mediates direct interaction with RBBP4 region spans residues 1–14 (MPRRKQEQPKRLPS). The segment at 1-77 (MPRRKQEQPK…DTSLGSTTPS (77 aa)) is disordered. Positions 3 to 5 (RRK) match the RRK motif; mediates NuRD recruitment to telomeres motif. The segment covering 62-77 (EQSTSPDTSLGSTTPS) has biased composition (polar residues). Glycyl lysine isopeptide (Lys-Gly) (interchain with G-Cter in SUMO2) cross-links involve residues Lys176, Lys216, and Lys226. Disordered stretches follow at residues 259 to 278 (KVSE…ASSF) and 307 to 348 (SSLL…SLEL). Positions 327–344 (VTPPPPPPPPPPPPPPPQ) are enriched in pro residues. Glycyl lysine isopeptide (Lys-Gly) (interchain with G-Cter in SUMO2) cross-links involve residues Lys360 and Lys372. 3 consecutive C2H2-type zinc fingers follow at residues 374–396 (FQCP…MVIH), 402–424 (HQCP…MKVH), and 433–455 (FQCQ…MRCH). Glycyl lysine isopeptide (Lys-Gly) (interchain with G-Cter in SUMO2) cross-links involve residues Lys466, Lys475, Lys523, Lys549, Lys580, Lys587, Lys597, Lys634, Lys639, and Lys658. Lys673 participates in a covalent cross-link: Glycyl lysine isopeptide (Lys-Gly) (interchain with G-Cter in SUMO1); alternate. Lys673 participates in a covalent cross-link: Glycyl lysine isopeptide (Lys-Gly) (interchain with G-Cter in SUMO2); alternate. Residues Lys704, Lys710, Lys742, Lys778, and Lys798 each participate in a glycyl lysine isopeptide (Lys-Gly) (interchain with G-Cter in SUMO2) cross-link. C2H2-type zinc fingers lie at residues 817 to 839 (FPCD…LSLH) and 845 to 867 (YKCH…LTVH). Residues Lys870 and Lys891 each participate in a glycyl lysine isopeptide (Lys-Gly) (interchain with G-Cter in SUMO2) cross-link. C2H2-type zinc fingers lie at residues 897–919 (YSCH…MSLH) and 929–952 (ICCT…GTKH). Over residues 947-960 (HIGTKHTGEDRKTP) the composition is skewed to basic and acidic residues. The disordered stretch occupies residues 947-996 (HIGTKHTGEDRKTPSESNSPSSSSLSALSDSANSKDDSDGSQKNKGGNNL). Residue Lys958 forms a Glycyl lysine isopeptide (Lys-Gly) (interchain with G-Cter in SUMO2) linkage. Residues 961 to 978 (SESNSPSSSSLSALSDSA) show a composition bias toward low complexity. Over residues 979–988 (NSKDDSDGSQ) the composition is skewed to basic and acidic residues. A Glycyl lysine isopeptide (Lys-Gly) (interchain with G-Cter in SUMO2) cross-link involves residue Lys1014. 2 consecutive C2H2-type zinc fingers follow at residues 1019-1041 (FECV…LQIH) and 1047-1069 (FECD…KKCH).

This sequence belongs to the krueppel C2H2-type zinc-finger protein family. As to quaternary structure, part of a transcription inhibitory ribonucleoprotein complex composed at least of the circular RNA circZNF827, HNRNPK and HNRNPL. Interacts with the nucleosome remodeling and histone deacetylase/NuRD complex. Interacts with RBBP4; the interaction is direct and recruits RBBP4, a component of the NuRD complex, to telomeres.

It localises to the nucleus. Its subcellular location is the chromosome. It is found in the telomere. Its function is as follows. As part of a ribonucleoprotein complex composed at least of HNRNPK, HNRNPL and the circular RNA circZNF827 that nucleates the complex on chromatin, may negatively regulate the transcription of genes involved in neuronal differentiation. Could also recruit the nucleosome remodeling and histone deacetylase/NuRD complex to telomeric regions of chromosomes to regulate chromatin remodeling as part of telomere maintenance. The sequence is that of Zinc finger protein 827 (ZNF827) from Homo sapiens (Human).